A 578-amino-acid chain; its full sequence is Proline--tRNA ligase (578 aa).

Belongs to the class-II aminoacyl-tRNA synthetase family. ProS type 1 subfamily. As to quaternary structure, homodimer.

The protein resides in the cytoplasm. The enzyme catalyses tRNA(Pro) + L-proline + ATP = L-prolyl-tRNA(Pro) + AMP + diphosphate. Its function is as follows. Catalyzes the attachment of proline to tRNA(Pro) in a two-step reaction: proline is first activated by ATP to form Pro-AMP and then transferred to the acceptor end of tRNA(Pro). As ProRS can inadvertently accommodate and process non-cognate amino acids such as alanine and cysteine, to avoid such errors it has two additional distinct editing activities against alanine. One activity is designated as 'pretransfer' editing and involves the tRNA(Pro)-independent hydrolysis of activated Ala-AMP. The other activity is designated 'posttransfer' editing and involves deacylation of mischarged Ala-tRNA(Pro). The misacylated Cys-tRNA(Pro) is not edited by ProRS. In Paraburkholderia phymatum (strain DSM 17167 / CIP 108236 / LMG 21445 / STM815) (Burkholderia phymatum), this protein is Proline--tRNA ligase.